We begin with the raw amino-acid sequence, 133 residues long: Magnetosome protein MamC (133 aa).

Residues 1–5 lie on the Cytoplasmic side of the membrane; sequence MAAFN. The chain crosses the membrane as a helical span at residues 6–26; the sequence is LALYLSKSIPGVGVLGGVIGG. Topologically, residues 27 to 67 are lumenal; the sequence is SAALAKNLKAKQRGEITTEEAVIDTGKEALGAGLATTVSAY. The magnetite interacting component (MIC) binds magnetite stretch occupies residues 37-57; sequence KQRGEITTEEAVIDTGKEALG. The helical transmembrane segment at 68 to 88 threads the bilayer; it reads AAGVVGGGLVVSLGTAFAVAV. The Cytoplasmic segment spans residues 89–133; the sequence is AGKYAWDYGMEQMEAKLQEKKHQEQGGQTYGDNPDPFDPQELETP. Residues 105 to 133 form a disordered region; that stretch reads LQEKKHQEQGGQTYGDNPDPFDPQELETP.

The protein belongs to the magnetosome MamC family. As to quaternary structure, probably interacts with MamA.

It is found in the magnetosome membrane. Its function is as follows. Probably helps control the size of magnetite crystals; in vitro synthesis of magnetite yields larger and more well-developed magnetite crystals in the presence of purified MamC. Binds Fe(3+). The lumenal domain probably binds magnetite crystals, affecting crystal size and shape. Purified MamC self-assembles into micelles in the presence of ferric chloride hexahydrate (FeCl(3).6H(2)O); both oxygen and iron are present in the proteinaceous micelles. Whether this is relevant in vivo is unknown. The polypeptide is Magnetosome protein MamC (Magnetococcus marinus (strain ATCC BAA-1437 / JCM 17883 / MC-1)).